A 60-amino-acid polypeptide reads, in one-letter code: Large ribosomal subunit protein bL32 (60 aa).

It belongs to the bacterial ribosomal protein bL32 family.

The protein is Large ribosomal subunit protein bL32 of Streptococcus equi subsp. zooepidemicus (strain MGCS10565).